We begin with the raw amino-acid sequence, 520 residues long: MSQDNDTLMRDILGHELAAMRLQKLEQQRRLFEKKQRQKRQELLMVQANPDASPWLWRSCLREERLLGDRGLGNPFLRKKVSEAHLPSGIHSALGTVSCGGDGRGERGLPTPRTEAVFRNLGLQSPFLSWLPDNSDAELEEVSVENGSVSPPPFKQSPRIRRKGWQAHQRPGTRAEGESDSQDMGDAHKSPNMGPNPGMDGDCVYENLAFQKEEDLEKKREASESTGTNSSAAHNEELSKALKGEGGTDSDHMRHEASLAIRSPCPGLEEDMEAYVLRPALPGTMMQCYLTRDKHGVDKGLFPLYYLYLETSDSLQRFLLAGRKRRRSKTSNYLISLDPTHLSRDGDNFVGKVRSNVFSTKFTIFDNGVNPDREHLTRNTARIRQELGAVCYEPNVLGYLGPRKMTVILPGTNSQNQRINVQPLNEQESLLSRYQRGDKQGLLLLHNKTPSWDKENGVYTLNFHGRVTRASVKNFQIVDPKHQEHLVLQFGRVGPDTFTMDFCFPFSPLQAFSICLSSFN.

Phosphoserine occurs at positions 135 and 190. The tract at residues 141-236 (EVSVENGSVS…GTNSSAAHNE (96 aa)) is disordered. Residues 211-223 (QKEEDLEKKREAS) show a composition bias toward basic and acidic residues. The segment covering 224–233 (ESTGTNSSAA) has biased composition (polar residues).

This sequence belongs to the TUB family. In terms of tissue distribution, strongly expressed in testis. Also expressed in retina. Expressed in cancer cell lines.

The protein resides in the cytoplasm. It is found in the secreted. The sequence is that of Tubby-related protein 2 (TULP2) from Homo sapiens (Human).